Reading from the N-terminus, the 478-residue chain is Zinc metalloproteinase/disintegrin (478 aa).

The first 20 residues, Met-1–Ser-20, serve as a signal peptide directing secretion. Residues Ile-21–Glu-190 constitute a propeptide that is removed on maturation. At Gln-191 the chain carries Pyrrolidone carboxylic acid. In terms of domain architecture, Peptidase M12B spans Arg-197–Pro-392. Positions 200 and 284 each coordinate Ca(2+). Cystine bridges form between Cys-308–Cys-387, Cys-349–Cys-371, and Cys-351–Cys-354. His-333 contacts Zn(2+). The active site involves Glu-334. Positions 337 and 343 each coordinate Zn(2+). Residues Cys-387 and Asn-390 each coordinate Ca(2+). Residues Leu-393–Ala-410 constitute a propeptide that is removed on maturation. In terms of domain architecture, Disintegrin spans Thr-400–Ser-478. Cystine bridges form between Cys-414–Cys-429, Cys-416–Cys-424, Cys-423–Cys-446, Cys-437–Cys-443, Cys-442–Cys-467, and Cys-455–Cys-474. The short motif at Arg-459–Asp-461 is the Cell attachment site element. Residues Arg-459–Ser-478 form a disordered region. The span at Thr-468 to Ser-478 shows a compositional bias: polar residues.

Belongs to the venom metalloproteinase (M12B) family. P-II subfamily. P-IIa sub-subfamily. Monomer. Requires Zn(2+) as cofactor. Not N-glycosylated. In terms of tissue distribution, expressed by the venom gland.

It is found in the secreted. It catalyses the reaction Cleavage of 3-Asn-|-Gln-4, 10-His-|-Leu-11 and 14-Ala-|-Leu-15 in the insulin B chain, and the bond Z-Gly-Pro-|-Leu-Gly-Pro in a small molecule substrate of microbial collagenase.. In terms of biological role, zinc protease that induces hemorrhage. Its function is as follows. Inhibits platelet aggregation induced by ADP, thrombin, and collagen. Acts by inhibiting fibrinogen interaction with platelet receptors GPIIb/GPIIIa (ITGA2B/ITGB3). The polypeptide is Zinc metalloproteinase/disintegrin (Protobothrops flavoviridis (Habu)).